The following is a 362-amino-acid chain: Peptide chain release factor 1 (362 aa).

N5-methylglutamine is present on Gln-235.

This sequence belongs to the prokaryotic/mitochondrial release factor family. Post-translationally, methylated by PrmC. Methylation increases the termination efficiency of RF1.

It localises to the cytoplasm. In terms of biological role, peptide chain release factor 1 directs the termination of translation in response to the peptide chain termination codons UAG and UAA. This Variovorax paradoxus (strain S110) protein is Peptide chain release factor 1.